The following is a 410-amino-acid chain: Neuroserpin (410 aa).

Positions 1–16 (MAYLGLLSLVALQSLV) are cleaved as a signal peptide. Ser-83 is subject to Phosphoserine. 3 N-linked (GlcNAc...) asparagine glycosylation sites follow: Asn-157, Asn-321, and Asn-401. An O-linked (Xyl...) (chondroitin sulfate) serine glycan is attached at Ser-403.

Belongs to the serpin family. In terms of tissue distribution, detected in adult pituitary and adrenal gland.

It is found in the secreted. It localises to the cytoplasmic vesicle. The protein localises to the secretory vesicle lumen. Its subcellular location is the perikaryon. Serine protease inhibitor that inhibits plasminogen activators and plasmin but not thrombin. May be involved in the formation or reorganization of synaptic connections as well as for synaptic plasticity in the adult nervous system. May protect neurons from cell damage by tissue-type plasminogen activator. This is Neuroserpin (Serpini1) from Rattus norvegicus (Rat).